A 268-amino-acid polypeptide reads, in one-letter code: Dioscorin DB3S (268 aa).

An Alpha-carbonic anhydrase domain is found at 25–259 (DEFSYIEGNP…TNFRSVFYFE (235 aa)). A disulfide bridge connects residues Cys-50 and Cys-209. The Proton acceptor role is filled by His-91. Residues Asp-92, 117 to 119 (HFH), Gln-136, and 205 to 206 (TA) each bind L-ascorbate.

Belongs to the alpha-class carbonic anhydrase family. As to quaternary structure, monomer. Homodimer. In terms of processing, not glycosylated. In terms of tissue distribution, expressed in tuber (at protein level).

It catalyses the reaction hydrogencarbonate + H(+) = CO2 + H2O. The enzyme catalyses 2 monodehydro-L-ascorbate radical + NADH + H(+) = 2 L-ascorbate + NAD(+). Functionally, storage protein of tuber. Involved in protection against oxidative stress. Has carbonate dehydratase and weak trypsin inhibitor activity detected by measuring the dehydration of sodium bicarbonate and the inhibition of trypsin-catalyzed hydrolysis of N-benzoyl-L-arginine-4-nitro anilide, respectively. Contrarily, no carbonate dehydratase or trypsin inhibitor activity detected by measuring the hydrolysis of 4-nitrophenyl acetate or the inhibition of bovine trypsin-catalyzed hydrolysis of N-benzoyl-L-arginine ethyl ester, respectively. Has dehydroascorbate (DHA) reductase and monodehydroascorbate (MDA) reductase activities. Catalyzes the reactions of carbonate dehydratase and DHA reductase independently of zinc and glutathione (GSH). The coupled reaction is capable of recycling a plant antioxidant ascorbate using ubiquitous compounds H(2)O and CO(2). Exhibits antioxidant activity. Able to scavenge 1,1-diphenyl-2-picrylhydrazyl (DPPH) radical and hydroxyl radicals. Exhibits immunomodulatory activity. Activates Toll-like receptor 4 signaling pathways by up-regulating the gene expression of pro-inflammatory cytokines, such as tumor necrosis factor alpha, interleukin-1 beta and interleukin-6, and chemokines RANTES and MCP-1, in mouse RAW 264.7 macrophages. Stimulates the phagocytosis of E.coli by the LPS-treated mouse macrophages. This Dioscorea polystachya (Chinese yam) protein is Dioscorin DB3S.